Consider the following 662-residue polypeptide: Glycogen debranching enzyme (662 aa).

D338 (nucleophile) is an active-site residue. E373 acts as the Proton donor in catalysis.

It belongs to the glycosyl hydrolase 13 family.

It carries out the reaction Hydrolysis of (1-&gt;6)-alpha-D-glucosidic linkages to branches with degrees of polymerization of three or four glucose residues in limit dextrin.. Its pathway is glycan degradation; glycogen degradation. Its function is as follows. Removes maltotriose and maltotetraose chains that are attached by 1,6-alpha-linkage to the limit dextrin main chain, generating a debranched limit dextrin. This is Glycogen debranching enzyme from Yersinia pseudotuberculosis serotype O:1b (strain IP 31758).